Consider the following 506-residue polypeptide: MGSTISPPSGEYLLEMRGINKSFPGVKALDNVNLNVRPHSIHALMGENGAGKSTLLKCLFGIYQKDSGSIVFQGKEVDFHSAKEALENGISMVHQELNLVLQRSVMDNMWLGRYPTKGMFVDQDKMYQDTKAIFDELDIDIDPRARVGTLSVSQMQMIEIAKAFSYNAKIVIMDEPTSSLTEKEVNHLFTIIRKLKERGCGIVYISHKMEEIFQLCDEITILRDGQWIATQPLEGLDMDKIIAMMVGRSLNQRFPDKENKPGDVILEVRHLTSLRQPSIRDVSFDLHKGEILGIAGLVGAKRTDIVETLFGIREKSSGTITLHGKKINNHTANEAINHGFALVTEERRSTGIYAYLDIGFNSLISNIRNYKNKVGLLDNSRMKSDTQWVIDSMRVKTPGHRTQIGSLSGGNQQKVIIGRWLLTQPEILMLDEPTRGIDVGAKFEIYQLIAELAKKGKGIIIISSEMPELLGITDRILVMSNGLVSGIVDTKTTTQNEILRLASLHL.

ABC transporter domains lie at 14–249 (LEMR…VGRS) and 259–506 (NKPG…SLHL). 46-53 (GENGAGKS) lines the ATP pocket.

The protein belongs to the ABC transporter superfamily. Galactose/methyl galactoside importer (TC 3.A.1.2.3) family. As to quaternary structure, the complex is composed of one ATP-binding protein (MglA), two transmembrane proteins (MglC) and a solute-binding protein (MglB).

Its subcellular location is the cell inner membrane. The enzyme catalyses D-galactose(out) + ATP + H2O = D-galactose(in) + ADP + phosphate + H(+). It catalyses the reaction methyl beta-D-galactoside(out) + ATP + H2O = methyl beta-D-galactoside(in) + ADP + phosphate + H(+). Stimulated 3-fold by galactose and inhibited by vanadate, N-ethylmaleimide, and 5-methoxyindole-2-carboxylic acid. In terms of biological role, part of the ABC transporter complex MglABC involved in galactose/methyl galactoside import. Responsible for energy coupling to the transport system. The chain is Galactose/methyl galactoside import ATP-binding protein MglA from Salmonella typhimurium (strain LT2 / SGSC1412 / ATCC 700720).